The chain runs to 1357 residues: DNA-directed RNA polymerase subunit beta (1357 aa).

Belongs to the RNA polymerase beta chain family. As to quaternary structure, the RNAP catalytic core consists of 2 alpha, 1 beta, 1 beta' and 1 omega subunit. When a sigma factor is associated with the core the holoenzyme is formed, which can initiate transcription.

The catalysed reaction is RNA(n) + a ribonucleoside 5'-triphosphate = RNA(n+1) + diphosphate. DNA-dependent RNA polymerase catalyzes the transcription of DNA into RNA using the four ribonucleoside triphosphates as substrates. This Pseudomonas putida (strain W619) protein is DNA-directed RNA polymerase subunit beta.